A 569-amino-acid polypeptide reads, in one-letter code: Urease subunit alpha (569 aa).

Residues 131–569 enclose the Urease domain; sequence GGMDAHIHYI…LPMAQRYFLF (439 aa). Histidine 136, histidine 138, and lysine 218 together coordinate Ni(2+). Lysine 218 is modified (N6-carboxylysine). Position 220 (histidine 220) interacts with substrate. Residues histidine 247 and histidine 273 each contribute to the Ni(2+) site. The active-site Proton donor is the histidine 321. Aspartate 361 contributes to the Ni(2+) binding site.

It belongs to the metallo-dependent hydrolases superfamily. Urease alpha subunit family. Heterotrimer of UreA (gamma), UreB (beta) and UreC (alpha) subunits. Three heterotrimers associate to form the active enzyme. It depends on Ni cation as a cofactor. Carboxylation allows a single lysine to coordinate two nickel ions.

It localises to the cytoplasm. It catalyses the reaction urea + 2 H2O + H(+) = hydrogencarbonate + 2 NH4(+). It participates in nitrogen metabolism; urea degradation; CO(2) and NH(3) from urea (urease route): step 1/1. The polypeptide is Urease subunit alpha (Agrobacterium fabrum (strain C58 / ATCC 33970) (Agrobacterium tumefaciens (strain C58))).